The chain runs to 474 residues: tRNA-2-methylthio-N(6)-dimethylallyladenosine synthase (474 aa).

The 118-residue stretch at 3-120 folds into the MTTase N-terminal domain; that stretch reads KKLHIKTWGC…LPEMINQVKG (118 aa). The [4Fe-4S] cluster site is built by Cys12, Cys49, Cys83, Cys157, Cys161, and Cys164. The Radical SAM core domain maps to 143–375; that stretch reads RAEGPTAFVS…QERINQQAMA (233 aa). The TRAM domain maps to 378 to 441; it reads RRMLGTTQRI…PNSLRGKVIR (64 aa).

The protein belongs to the methylthiotransferase family. MiaB subfamily. Monomer. It depends on [4Fe-4S] cluster as a cofactor.

Its subcellular location is the cytoplasm. It carries out the reaction N(6)-dimethylallyladenosine(37) in tRNA + (sulfur carrier)-SH + AH2 + 2 S-adenosyl-L-methionine = 2-methylsulfanyl-N(6)-dimethylallyladenosine(37) in tRNA + (sulfur carrier)-H + 5'-deoxyadenosine + L-methionine + A + S-adenosyl-L-homocysteine + 2 H(+). Catalyzes the methylthiolation of N6-(dimethylallyl)adenosine (i(6)A), leading to the formation of 2-methylthio-N6-(dimethylallyl)adenosine (ms(2)i(6)A) at position 37 in tRNAs that read codons beginning with uridine. The sequence is that of tRNA-2-methylthio-N(6)-dimethylallyladenosine synthase from Cronobacter sakazakii (strain ATCC BAA-894) (Enterobacter sakazakii).